The following is a 99-amino-acid chain: Acylphosphatase (99 aa).

The region spanning 5–97 is the Acylphosphatase-like domain; it reads ILQVMIRGRV…RAGEKFSVLP (93 aa). Residues arginine 20 and asparagine 38 contribute to the active site.

Belongs to the acylphosphatase family.

It carries out the reaction an acyl phosphate + H2O = a carboxylate + phosphate + H(+). This Bradyrhizobium diazoefficiens (strain JCM 10833 / BCRC 13528 / IAM 13628 / NBRC 14792 / USDA 110) protein is Acylphosphatase (acyP).